The primary structure comprises 110 residues: Hydrogenase maturation factor HypA (110 aa).

A Ni(2+)-binding site is contributed by histidine 2. Residues cysteine 70, cysteine 73, cysteine 86, and cysteine 89 each coordinate Zn(2+).

It belongs to the HypA/HybF family.

Its function is as follows. Involved in the maturation of [NiFe] hydrogenases. Required for nickel insertion into the metal center of the hydrogenase. The protein is Hydrogenase maturation factor HypA of Geotalea daltonii (strain DSM 22248 / JCM 15807 / FRC-32) (Geobacter daltonii).